The sequence spans 251 residues: uncharacterized protein (251 aa).

Residues 1–18 (MRILIILSIILCSFFARA) form the signal peptide.

The protein belongs to the MlaA family.

This is an uncharacterized protein from Rickettsia typhi (strain ATCC VR-144 / Wilmington).